Reading from the N-terminus, the 839-residue chain is Probable beta-glucosidase I (839 aa).

A glycan (N-linked (GlcNAc...) asparagine) is linked at Asn197. Asp225 is an active-site residue. Positions 395–555 (DGKKGFSFRV…SQEELIAKAA (161 aa)) constitute a PA14 domain.

Belongs to the glycosyl hydrolase 3 family.

The protein resides in the secreted. It carries out the reaction Hydrolysis of terminal, non-reducing beta-D-glucosyl residues with release of beta-D-glucose.. It participates in glycan metabolism; cellulose degradation. In terms of biological role, beta-glucosidases are one of a number of cellulolytic enzymes involved in the degradation of cellulosic biomass. Catalyzes the last step releasing glucose from the inhibitory cellobiose. The chain is Probable beta-glucosidase I (bglI) from Aspergillus terreus (strain NIH 2624 / FGSC A1156).